Reading from the N-terminus, the 115-residue chain is Parathyroid hormone (115 aa).

Positions 1–25 (MMSASTMAKVMILMLAVCLLTQADG) are cleaved as a signal peptide. Positions 26 to 31 (KPVKKR) are excised as a propeptide. The tract at residues 51-69 (RMQWLRKKLQDVHNFVSLG) is important for receptor binding. A disordered region spans residues 76 to 101 (EGSYQRPTKKEENVLVDGNSKSLGEG).

This sequence belongs to the parathyroid hormone family. As to quaternary structure, interacts with PTH1R (via N-terminal extracellular domain). As to expression, hypothalamus and parathyroid gland.

Its subcellular location is the secreted. Functionally, parathyroid hormone elevates calcium level by dissolving the salts in bone and preventing their renal excretion. Acts by binding to its receptor, PTH1R, activating G protein-coupled receptor signaling. Stimulates [1-14C]-2-deoxy-D-glucose (2DG) transport and glycogen synthesis in osteoblastic cells. The sequence is that of Parathyroid hormone (Pth) from Rattus norvegicus (Rat).